Consider the following 467-residue polypeptide: Chromosomal replication initiator protein DnaA (467 aa).

Residues 1–79 (MTELDQFWPA…GELPVELRLG (79 aa)) are domain I, interacts with DnaA modulators. Residues 79-129 (GAPTARPAAPVAGNSQPKAKEPAKAAASAPAAPSPAKQAAVKAIGGSHEST) form a domain II region. The disordered stretch occupies residues 84 to 126 (RPAAPVAGNSQPKAKEPAKAAASAPAAPSPAKQAAVKAIGGSH). The segment covering 102-121 (KAAASAPAAPSPAKQAAVKA) has biased composition (low complexity). The tract at residues 130-347 (RLNPSFTFDT…GALKRVVAYA (218 aa)) is domain III, AAA+ region. ATP contacts are provided by Gly-175, Gly-177, Lys-178, and Thr-179. Residues 348 to 467 (RFTSQNITLE…YEALLSMLRN (120 aa)) are domain IV, binds dsDNA.

This sequence belongs to the DnaA family. In terms of assembly, oligomerizes as a right-handed, spiral filament on DNA at oriC.

The protein localises to the cytoplasm. Its function is as follows. Plays an essential role in the initiation and regulation of chromosomal replication. ATP-DnaA binds to the origin of replication (oriC) to initiate formation of the DNA replication initiation complex once per cell cycle. Binds the DnaA box (a 9 base pair repeat at the origin) and separates the double-stranded (ds)DNA. Forms a right-handed helical filament on oriC DNA; dsDNA binds to the exterior of the filament while single-stranded (ss)DNA is stabiized in the filament's interior. The ATP-DnaA-oriC complex binds and stabilizes one strand of the AT-rich DNA unwinding element (DUE), permitting loading of DNA polymerase. After initiation quickly degrades to an ADP-DnaA complex that is not apt for DNA replication. Binds acidic phospholipids. This is Chromosomal replication initiator protein DnaA from Chromobacterium violaceum (strain ATCC 12472 / DSM 30191 / JCM 1249 / CCUG 213 / NBRC 12614 / NCIMB 9131 / NCTC 9757 / MK).